We begin with the raw amino-acid sequence, 49 residues long: Large ribosomal subunit protein bL33B (49 aa).

The protein belongs to the bacterial ribosomal protein bL33 family.

In Staphylococcus epidermidis (strain ATCC 12228 / FDA PCI 1200), this protein is Large ribosomal subunit protein bL33B (rpmG2).